The following is a 401-amino-acid chain: Chalcone synthase 2 (401 aa).

Residue cysteine 168 is part of the active site.

It belongs to the thiolase-like superfamily. Chalcone/stilbene synthases family.

It catalyses the reaction (E)-4-coumaroyl-CoA + 3 malonyl-CoA + 3 H(+) = 2',4,4',6'-tetrahydroxychalcone + 3 CO2 + 4 CoA. It participates in secondary metabolite biosynthesis; flavonoid biosynthesis. Its function is as follows. The primary product of this enzyme is 4,2',4',6'-tetrahydroxychalcone (also termed naringenin-chalcone or chalcone) which can under specific conditions spontaneously isomerize into naringenin. The sequence is that of Chalcone synthase 2 (CHS2) from Sorghum bicolor (Sorghum).